The sequence spans 386 residues: 3-hydroxyisobutyryl-CoA hydrolase, mitochondrial (386 aa).

A mitochondrion-targeting transit peptide spans 1–32 (MGLQGLCRLMSRFNSYKRTNIILQHLKMSNHT). Residue K92 is modified to N6-acetyllysine; alternate. An N6-succinyllysine; alternate modification is found at K92. Residues E121, G146, E169, and D177 each coordinate substrate. K221 is modified (N6-acetyllysine; alternate). K221 is subject to N6-succinyllysine; alternate. S234 carries the post-translational modification Phosphoserine. An N6-succinyllysine mark is found at K250 and K257. Position 297 is an N6-acetyllysine; alternate (K297). K297 bears the N6-succinyllysine; alternate mark. K301 bears the N6-succinyllysine mark. At K353 the chain carries N6-acetyllysine; alternate. N6-succinyllysine; alternate is present on K353. S356 is subject to Phosphoserine. An N6-acetyllysine mark is found at K360 and K365. The residue at position 377 (K377) is an N6-succinyllysine.

The protein belongs to the enoyl-CoA hydratase/isomerase family.

Its subcellular location is the mitochondrion. It carries out the reaction 3-hydroxy-2-methylpropanoyl-CoA + H2O = 3-hydroxy-2-methylpropanoate + CoA + H(+). It functions in the pathway amino-acid degradation; L-valine degradation. In terms of biological role, hydrolyzes 3-hydroxyisobutyryl-CoA (HIBYL-CoA), a saline catabolite. Has high activity toward isobutyryl-CoA. Could be an isobutyryl-CoA dehydrogenase that functions in valine catabolism. Also hydrolyzes 3-hydroxypropanoyl-CoA. The sequence is that of 3-hydroxyisobutyryl-CoA hydrolase, mitochondrial (HIBCH) from Bos taurus (Bovine).